The following is a 160-amino-acid chain: Cytochrome b6-f complex subunit 4 (160 aa).

3 helical membrane-spanning segments follow: residues 36–56 (LLYI…GLAI), 95–115 (LLGV…PFLE), and 131–151 (TVFL…TLPI).

Belongs to the cytochrome b family. PetD subfamily. In terms of assembly, the 4 large subunits of the cytochrome b6-f complex are cytochrome b6, subunit IV (17 kDa polypeptide, petD), cytochrome f and the Rieske protein, while the 4 small subunits are petG, petL, petM and petN. The complex functions as a dimer.

It is found in the plastid. Its subcellular location is the chloroplast thylakoid membrane. Its function is as follows. Component of the cytochrome b6-f complex, which mediates electron transfer between photosystem II (PSII) and photosystem I (PSI), cyclic electron flow around PSI, and state transitions. The sequence is that of Cytochrome b6-f complex subunit 4 from Acorus calamus (Sweet flag).